Here is an 868-residue protein sequence, read N- to C-terminus: Translation initiation factor IF-2 (868 aa).

Basic and acidic residues predominate over residues 103–183; that stretch reads RSELPETSDR…RQAAAERETV (81 aa). Residues 103 to 274 are disordered; that stretch reads RSELPETSDR…GRPMLMPEQK (172 aa). Residues 190-207 are compositionally biased toward pro residues; it reads VAAPPIPRPAPEPRPPAR. Residues 213 to 254 are compositionally biased toward basic and acidic residues; it reads PKAEAPRAHPAERETEARGDKRSAGLSRKDEYRELQGDDFRK. The segment covering 255–264 has biased composition (basic residues); that stretch reads GGGKRKKPKT. Positions 369-538 constitute a tr-type G domain; it reads PRPPVVTIMG…LVQAEVLELK (170 aa). A G1 region spans residues 378–385; the sequence is GHVDHGKT. A GTP-binding site is contributed by 378 to 385; it reads GHVDHGKT. A G2 region spans residues 403–407; it reads GITQH. The segment at 424–427 is G3; that stretch reads DTPG. GTP-binding positions include 424 to 428 and 478 to 481; these read DTPGH and NKMD. The interval 478–481 is G4; it reads NKMD. The G5 stretch occupies residues 514–516; sequence SAK.

This sequence belongs to the TRAFAC class translation factor GTPase superfamily. Classic translation factor GTPase family. IF-2 subfamily.

It is found in the cytoplasm. Functionally, one of the essential components for the initiation of protein synthesis. Protects formylmethionyl-tRNA from spontaneous hydrolysis and promotes its binding to the 30S ribosomal subunits. Also involved in the hydrolysis of GTP during the formation of the 70S ribosomal complex. This Methylococcus capsulatus (strain ATCC 33009 / NCIMB 11132 / Bath) protein is Translation initiation factor IF-2.